Reading from the N-terminus, the 178-residue chain is Interleukin-10 (178 aa).

The signal sequence occupies residues 1–18 (MPNPVLLYCLVLLAGMGT). Cystine bridges form between C30–C126 and C80–C132. N-linked (GlcNAc...) asparagine glycosylation occurs at N134.

It belongs to the IL-10 family. Homodimer. Interacts with IL10RA and IL10RB.

The protein localises to the secreted. In terms of biological role, major immune regulatory cytokine that acts on many cells of the immune system where it has profound anti-inflammatory functions, limiting excessive tissue disruption caused by inflammation. Mechanistically, IL10 binds to its heterotetrameric receptor comprising IL10RA and IL10RB leading to JAK1 and STAT2-mediated phosphorylation of STAT3. In turn, STAT3 translocates to the nucleus where it drives expression of anti-inflammatory mediators. Targets antigen-presenting cells (APCs) such as macrophages and monocytes and inhibits their release of pro-inflammatory cytokines including granulocyte-macrophage colony-stimulating factor /GM-CSF, granulocyte colony-stimulating factor/G-CSF, IL-1 alpha, IL-1 beta, IL-6, IL-8 and TNF-alpha. Also interferes with antigen presentation by reducing the expression of MHC-class II and co-stimulatory molecules, thereby inhibiting their ability to induce T cell activation. In addition, controls the inflammatory response of macrophages by reprogramming essential metabolic pathways including mTOR signaling. The protein is Interleukin-10 (IL10) of Marmota monax (Woodchuck).